The sequence spans 119 residues: MKRIAFVFSTVPHGTAAGREGLDALLATSALTDELAVFFIADGVFQLLPGQKPDAVLARDYIATFKLLGLYDIEQCWVCAASLRERGLDPQTPFVVEATPLEADALRRELANYDVILRF.

This sequence belongs to the DsrF/TusC family. In terms of assembly, heterohexamer, formed by a dimer of trimers. The hexameric TusBCD complex contains 2 copies each of TusB, TusC and TusD. The TusBCD complex interacts with TusE.

It is found in the cytoplasm. Part of a sulfur-relay system required for 2-thiolation of 5-methylaminomethyl-2-thiouridine (mnm(5)s(2)U) at tRNA wobble positions. The sequence is that of Protein TusC from Shigella dysenteriae serotype 1 (strain Sd197).